The chain runs to 134 residues: Methylmalonyl-CoA decarboxylase subunit gamma (134 aa).

Low complexity predominate over residues Ala-28–Ala-38. A disordered region spans residues Ala-28–Thr-67. A compositionally biased stretch (pro residues) spans Pro-39–Ala-53. Residues Pro-54–Thr-67 show a composition bias toward low complexity. The Biotinyl-binding domain occupies Ala-58 to Ser-134. An N6-biotinyllysine modification is found at Lys-100.

The methylmalonyl-CoA decarboxylase is composed of four subunits: the carboxyltransferase alpha subunit (MmdA), the tunnel beta subunit (MmdB), the biotin-containing gamma subunit (MmdC) and the delta subunit (MmdD). The cofactor is biotin.

It is found in the cell membrane. The catalysed reaction is (S)-methylmalonyl-CoA + Na(+)(in) + H(+)(out) = propanoyl-CoA + Na(+)(out) + CO2. Biotin-containing subunit of the sodium ion pump methylmalonyl-CoA decarboxylase, which converts the chemical energy of a decarboxylation reaction into an electrochemical gradient of Na(+) ions across the cytoplasmic membrane, thereby creating a sodium ion motive force that is used for ATP synthesis. The chain is Methylmalonyl-CoA decarboxylase subunit gamma from Propionigenium modestum.